A 551-amino-acid polypeptide reads, in one-letter code: Colicin-E6 (551 aa).

Disordered regions lie at residues 1–74 (MSGG…SGGG), 244–269 (LSPG…NTRD), 293–317 (PDQV…HPVE), 406–501 (NKQA…WYGD), and 517–551 (EGYR…KKYL). Gly residues predominate over residues 20 to 35 (INGGPTGLGVGGGASD). The span at 36–45 (GSGWSSENNP) shows a compositional bias: low complexity. Gly residues predominate over residues 46–74 (WGGGSGSGIHWGGGSGHGNGGGNGNSGGG). Basic and acidic residues-rich tracts occupy residues 296-317 (VKQR…HPVE) and 430-484 (ESRK…EGKP). The ribosome inactivating activity stretch occupies residues 455–551 (KGVKDYGHDY…DPKRNIKKYL (97 aa)). The interval 530 to 551 (FEPKTGNQLKGPDPKRNIKKYL) is binding of immunity protein.

The protein belongs to the cloacin colicin family.

Functionally, inactivates ribosomes by hydrolyzing 16S RNA in 30S ribosomes at a specific site. In terms of biological role, colicins are polypeptide toxins produced by and active against E.coli and closely related bacteria. The sequence is that of Colicin-E6 from Escherichia coli.